We begin with the raw amino-acid sequence, 380 residues long: METKTKLHVGLLFGGNSSEHDVSKRSAHNIYDAMDKDRYNVSLFLLTRDGFVLSDAASRRVFDGEDEATVAAEEQAKVDASNPLAPIWNLSQAKDIDVFFPIIHGNLGEDGTIQGLFRLLKKPFVGSGVLASAVSFDKDMTKQVLTAHGIRNTKYVVLTPDNRADFDYATIQSRLGDNVFIKPANQGSSVGIHKASNVQEYLDGVADAFRYDYKVLVEQTIDGPQEVEISILGNEQPQASKLGAIRVPESDVFYDYNNKFVDASGVTFEVPVKLSDELTQEITQMGLQTYAALGLKGMARIDYLVSKDGVPYVGEVNTLPGFTNISLYPQLWQATGINYADLIDRLIELALSEFHYQDELAYDFIPLDDHSAASTYKPKA.

Residues 142–348 (KQVLTAHGIR…YADLIDRLIE (207 aa)) enclose the ATP-grasp domain. 172–227 (QSRLGDNVFIKPANQGSSVGIHKASNVQEYLDGVADAFRYDYKVLVEQTIDGPQEV) lines the ATP pocket. Positions 302, 315, and 317 each coordinate Mg(2+).

This sequence belongs to the D-alanine--D-alanine ligase family. Mg(2+) is required as a cofactor. The cofactor is Mn(2+).

The protein localises to the cytoplasm. It carries out the reaction 2 D-alanine + ATP = D-alanyl-D-alanine + ADP + phosphate + H(+). It functions in the pathway cell wall biogenesis; peptidoglycan biosynthesis. Its function is as follows. Cell wall formation. This Levilactobacillus brevis (strain ATCC 367 / BCRC 12310 / CIP 105137 / JCM 1170 / LMG 11437 / NCIMB 947 / NCTC 947) (Lactobacillus brevis) protein is D-alanine--D-alanine ligase.